Consider the following 388-residue polypeptide: Succinate--CoA ligase [ADP-forming] subunit beta (388 aa).

Positions 9 to 245 (KALLKEYGMP…KSQENERELK (237 aa)) constitute an ATP-grasp domain. Residues Lys46, 53 to 55 (GRG), Glu100, Tyr103, and Glu108 each bind ATP. The Mg(2+) site is built by Asn200 and Asp214. Residues Asn265 and 322 to 324 (GIV) contribute to the substrate site.

Belongs to the succinate/malate CoA ligase beta subunit family. Heterotetramer of two alpha and two beta subunits. The cofactor is Mg(2+).

The catalysed reaction is succinate + ATP + CoA = succinyl-CoA + ADP + phosphate. It carries out the reaction GTP + succinate + CoA = succinyl-CoA + GDP + phosphate. It functions in the pathway carbohydrate metabolism; tricarboxylic acid cycle; succinate from succinyl-CoA (ligase route): step 1/1. Succinyl-CoA synthetase functions in the citric acid cycle (TCA), coupling the hydrolysis of succinyl-CoA to the synthesis of either ATP or GTP and thus represents the only step of substrate-level phosphorylation in the TCA. The beta subunit provides nucleotide specificity of the enzyme and binds the substrate succinate, while the binding sites for coenzyme A and phosphate are found in the alpha subunit. The protein is Succinate--CoA ligase [ADP-forming] subunit beta of Acinetobacter baumannii (strain SDF).